The sequence spans 164 residues: UPF0114 protein YqhA (164 aa).

The next 3 membrane-spanning stretches (helical) occupy residues 15 to 35 (LLAPVYFGLSLALVALALKFF), 53 to 73 (LILVLLSLVDMTLVGGLLVMV), and 136 to 156 (LMWYVIIHLTFVLSAFVMGYL).

This sequence belongs to the UPF0114 family.

It localises to the cell membrane. This is UPF0114 protein YqhA from Escherichia coli O139:H28 (strain E24377A / ETEC).